The chain runs to 515 residues: Aldehyde dehydrogenase tropH (515 aa).

NAD(+) is bound at residue 238–243 (GSVATG). Glu260 functions as the Proton acceptor in the catalytic mechanism. The active-site Nucleophile is the Cys295.

It belongs to the aldehyde dehydrogenase family.

The enzyme catalyses an aldehyde + NAD(+) + H2O = a carboxylate + NADH + 2 H(+). The protein operates within secondary metabolite biosynthesis. Its function is as follows. Aldehyde dehydrogenase; part of the gene cluster that mediates the biosynthesis of the tropolone class of fungal maleic anhydrides. The pathway begins with the synthesis of 3-methylorcinaldehyde by the non-reducing polyketide synthase (PKS) tropA. 3-methylorcinaldehyde is the substrate for the FAD-dependent monooxygenase tropB to yield a dearomatized hydroxycyclohexadione. The 2-oxoglutarate-dependent dioxygenase tropC then performs the oxidative ring expansion to provide the first tropolone metabolite stipitaldehyde. Trop D converts stipitaldehyde into stipitacetal which is in turn converted to stipitalide by the short-chain dehydrogenase/reductase tropE. The next steps involve tropF, tropG, tropH, tropI and tropJ to form successive tropolone maleic anhydrides including stipitaldehydic, stipitatonic and stipitatic acids. This is Aldehyde dehydrogenase tropH from Talaromyces stipitatus (strain ATCC 10500 / CBS 375.48 / QM 6759 / NRRL 1006) (Penicillium stipitatum).